The primary structure comprises 139 residues: S-protein homolog 14 (139 aa).

Positions 1–20 (MNRFIIFMFVVVTYFGLNVA) are cleaved as a signal peptide. Asn136 carries N-linked (GlcNAc...) asparagine glycosylation.

This sequence belongs to the plant self-incompatibility (S1) protein family.

It localises to the secreted. The sequence is that of S-protein homolog 14 from Arabidopsis thaliana (Mouse-ear cress).